Reading from the N-terminus, the 266-residue chain is Esterase AGAP003155 (266 aa).

Active-site charge relay system residues include serine 114, aspartate 172, and histidine 199. A disordered region spans residues 231 to 266; it reads ATEENSFHLEGQEEAEESALQPVHEGLQNGSDSDSD.

It belongs to the LovG family.

The sequence is that of Esterase AGAP003155 from Anopheles gambiae (African malaria mosquito).